A 628-amino-acid chain; its full sequence is NUAK family SNF1-like kinase 2 (628 aa).

Met1 carries the N-acetylmethionine modification. In terms of domain architecture, Protein kinase spans 53–303 (YEFLETLGKG…LEDVASHWWV (251 aa)). Residues 59–67 (LGKGTYGKV) and Lys81 each bind ATP. The active-site Proton acceptor is the Asp175. Thr208 carries the phosphothreonine modification. Disordered regions lie at residues 355 to 492 (KQHA…PQAS) and 522 to 570 (GSLD…PLRG). The span at 428-444 (ELSPIPVSPGQAAPPLP) shows a compositional bias: pro residues. Residue Ser435 is modified to Phosphoserine. Residues 457–469 (SGYYSSPEPSESG) show a composition bias toward low complexity. Ser523, Ser544, Ser547, and Ser573 each carry phosphoserine.

It belongs to the protein kinase superfamily. CAMK Ser/Thr protein kinase family. SNF1 subfamily. Mg(2+) serves as cofactor. Phosphorylated at Thr-208 by STK11/LKB1 in complex with STE20-related adapter-alpha (STRADA) pseudo kinase and CAB39. Autophosphorylation is also possible at Thr-208.

It carries out the reaction L-seryl-[protein] + ATP = O-phospho-L-seryl-[protein] + ADP + H(+). It catalyses the reaction L-threonyl-[protein] + ATP = O-phospho-L-threonyl-[protein] + ADP + H(+). Its activity is regulated as follows. Activated by phosphorylation on Thr-208. Its function is as follows. Stress-activated kinase involved in tolerance to glucose starvation. Induces cell-cell detachment by increasing F-actin conversion to G-actin. Expression is induced by CD95 or TNF-alpha, via NF-kappa-B. Protects cells from CD95-mediated apoptosis and is required for the increased motility and invasiveness of CD95-activated tumor cells. Phosphorylates LATS1 and LATS2. Plays a key role in neural tube closure during embryonic development through LATS2 phosphorylation and regulation of the nuclear localization of YAP1 a critical downstream regulatory target in the Hippo signaling pathway. This chain is NUAK family SNF1-like kinase 2, found in Pongo abelii (Sumatran orangutan).